The chain runs to 394 residues: Argininosuccinate synthase (394 aa).

ATP is bound by residues 7-15 and Ala-34; that span reads AYSGGLDTS. Residues Tyr-85 and Ser-90 each coordinate L-citrulline. Gly-115 is a binding site for ATP. L-aspartate contacts are provided by Thr-117, Asn-121, and Asp-122. Asn-121 provides a ligand contact to L-citrulline. L-citrulline-binding residues include Arg-125, Ser-176, Ser-185, Glu-261, and Tyr-273.

This sequence belongs to the argininosuccinate synthase family. Type 1 subfamily. Homotetramer.

The protein resides in the cytoplasm. It catalyses the reaction L-citrulline + L-aspartate + ATP = 2-(N(omega)-L-arginino)succinate + AMP + diphosphate + H(+). It functions in the pathway amino-acid biosynthesis; L-arginine biosynthesis; L-arginine from L-ornithine and carbamoyl phosphate: step 2/3. The chain is Argininosuccinate synthase from Ehrlichia ruminantium (strain Welgevonden).